The primary structure comprises 469 residues: Glutamine synthetase (469 aa).

A GS beta-grasp domain is found at Asn14 to Gly99. Residues Pro106–Val469 enclose the GS catalytic domain. Mg(2+) is bound by residues Glu131 and Glu133. Glu209 provides a ligand contact to ATP. The Mg(2+) site is built by Glu214 and Glu221. L-glutamate-binding positions include Asn265–Gly266 and Gly266. Mg(2+) is bound at residue His270. ATP contacts are provided by residues His272 to Ser274 and Ser274. Residues Arg322, Glu328, and Arg340 each coordinate L-glutamate. Positions 340, 345, and 353 each coordinate ATP. Glu358 lines the Mg(2+) pocket. Position 360 (Arg360) interacts with L-glutamate. Tyr398 carries the O-AMP-tyrosine modification.

Belongs to the glutamine synthetase family. As to quaternary structure, oligomer of 12 subunits arranged in the form of two hexameric ring. Requires Mg(2+) as cofactor.

It localises to the cytoplasm. The enzyme catalyses L-glutamate + NH4(+) + ATP = L-glutamine + ADP + phosphate + H(+). With respect to regulation, the activity of this enzyme could be controlled by adenylation under conditions of abundant glutamine. Catalyzes the ATP-dependent biosynthesis of glutamine from glutamate and ammonia. The sequence is that of Glutamine synthetase from Rhizobium meliloti (strain 1021) (Ensifer meliloti).